A 265-amino-acid polypeptide reads, in one-letter code: Anamorsin homolog 1 (265 aa).

Residues methionine 1 to phenylalanine 143 form an N-terminal SAM-like domain region. The linker stretch occupies residues proline 144 to leucine 175. [2Fe-2S] cluster contacts are provided by cysteine 186, cysteine 195, cysteine 198, and cysteine 200. Residues cysteine 186–cysteine 200 are fe-S binding site A. Positions 226, 229, 237, and 240 each coordinate [4Fe-4S] cluster. Short sequence motifs (cx2C motif) lie at residues cysteine 226 to cysteine 229 and cysteine 237 to cysteine 240. A fe-S binding site B region spans residues cysteine 226 to cysteine 240.

It belongs to the anamorsin family. In terms of assembly, monomer. Requires [2Fe-2S] cluster as cofactor. The cofactor is [4Fe-4S] cluster.

The protein localises to the cytoplasm. The protein resides in the mitochondrion intermembrane space. Functionally, component of the cytosolic iron-sulfur (Fe-S) protein assembly (CIA) machinery. Required for the maturation of extramitochondrial Fe-S proteins. Part of an electron transfer chain functioning in an early step of cytosolic Fe-S biogenesis, facilitating the de novo assembly of a [4Fe-4S] cluster on the cytosolic Fe-S scaffold complex. Electrons are transferred from NADPH via a FAD- and FMN-containing diflavin oxidoreductase. Together with the diflavin oxidoreductase, also required for the assembly of the diferric tyrosyl radical cofactor of ribonucleotide reductase (RNR), probably by providing electrons for reduction during radical cofactor maturation in the catalytic small subunit. This chain is Anamorsin homolog 1, found in Oryza sativa subsp. indica (Rice).